Here is a 338-residue protein sequence, read N- to C-terminus: Phenylalanine--tRNA ligase alpha subunit (338 aa).

Residue Glu253 participates in Mg(2+) binding.

It belongs to the class-II aminoacyl-tRNA synthetase family. Phe-tRNA synthetase alpha subunit type 1 subfamily. As to quaternary structure, tetramer of two alpha and two beta subunits. Requires Mg(2+) as cofactor.

It is found in the cytoplasm. It catalyses the reaction tRNA(Phe) + L-phenylalanine + ATP = L-phenylalanyl-tRNA(Phe) + AMP + diphosphate + H(+). This chain is Phenylalanine--tRNA ligase alpha subunit, found in Geobacter sp. (strain M21).